The chain runs to 99 residues: Citrate lyase acyl carrier protein (99 aa).

An O-(phosphoribosyl dephospho-coenzyme A)serine modification is found at Ser14.

The protein belongs to the CitD family. As to quaternary structure, oligomer with a subunit composition of (alpha,beta,gamma)6.

It localises to the cytoplasm. Its function is as follows. Covalent carrier of the coenzyme of citrate lyase. This Edwardsiella ictaluri (strain 93-146) protein is Citrate lyase acyl carrier protein.